Consider the following 402-residue polypeptide: Putative nickel insertion protein (402 aa).

Belongs to the LarC family.

The protein is Putative nickel insertion protein of Synechococcus elongatus (strain ATCC 33912 / PCC 7942 / FACHB-805) (Anacystis nidulans R2).